A 229-amino-acid polypeptide reads, in one-letter code: Lipoprotein-releasing system ATP-binding protein LolD (229 aa).

Residues 9-229 form the ABC transporter domain; that stretch reads LRLEQVARRY…TIREGQIVPA (221 aa). ATP is bound at residue 45–52; that stretch reads APSGTGKS.

It belongs to the ABC transporter superfamily. Lipoprotein translocase (TC 3.A.1.125) family. In terms of assembly, the complex is composed of two ATP-binding proteins (LolD) and two transmembrane proteins (LolC and LolE).

Its subcellular location is the cell inner membrane. Functionally, part of the ABC transporter complex LolCDE involved in the translocation of mature outer membrane-directed lipoproteins, from the inner membrane to the periplasmic chaperone, LolA. Responsible for the formation of the LolA-lipoprotein complex in an ATP-dependent manner. In Granulibacter bethesdensis (strain ATCC BAA-1260 / CGDNIH1), this protein is Lipoprotein-releasing system ATP-binding protein LolD.